The sequence spans 472 residues: Uronate isomerase (472 aa).

It belongs to the metallo-dependent hydrolases superfamily. Uronate isomerase family.

The enzyme catalyses D-glucuronate = D-fructuronate. It carries out the reaction aldehydo-D-galacturonate = keto-D-tagaturonate. It participates in carbohydrate metabolism; pentose and glucuronate interconversion. This is Uronate isomerase from Opitutus terrae (strain DSM 11246 / JCM 15787 / PB90-1).